We begin with the raw amino-acid sequence, 120 residues long: Large ribosomal subunit protein bL17 (120 aa).

The protein belongs to the bacterial ribosomal protein bL17 family. As to quaternary structure, part of the 50S ribosomal subunit. Contacts protein L32.

The sequence is that of Large ribosomal subunit protein bL17 from Desulforapulum autotrophicum (strain ATCC 43914 / DSM 3382 / VKM B-1955 / HRM2) (Desulfobacterium autotrophicum).